We begin with the raw amino-acid sequence, 421 residues long: Serine--tRNA ligase (421 aa).

231-233 (TGE) serves as a coordination point for L-serine. 262 to 264 (RRE) serves as a coordination point for ATP. Glu285 contributes to the L-serine binding site. 349–352 (EVSS) serves as a coordination point for ATP. Ser384 contributes to the L-serine binding site.

This sequence belongs to the class-II aminoacyl-tRNA synthetase family. Type-1 seryl-tRNA synthetase subfamily. As to quaternary structure, homodimer. The tRNA molecule binds across the dimer.

The protein resides in the cytoplasm. The enzyme catalyses tRNA(Ser) + L-serine + ATP = L-seryl-tRNA(Ser) + AMP + diphosphate + H(+). It catalyses the reaction tRNA(Sec) + L-serine + ATP = L-seryl-tRNA(Sec) + AMP + diphosphate + H(+). It functions in the pathway aminoacyl-tRNA biosynthesis; selenocysteinyl-tRNA(Sec) biosynthesis; L-seryl-tRNA(Sec) from L-serine and tRNA(Sec): step 1/1. Catalyzes the attachment of serine to tRNA(Ser). Is also able to aminoacylate tRNA(Sec) with serine, to form the misacylated tRNA L-seryl-tRNA(Sec), which will be further converted into selenocysteinyl-tRNA(Sec). This Methylacidiphilum infernorum (isolate V4) (Methylokorus infernorum (strain V4)) protein is Serine--tRNA ligase.